The chain runs to 443 residues: tRNA modification GTPase MnmE (443 aa).

3 residues coordinate (6S)-5-formyl-5,6,7,8-tetrahydrofolate: Arg-23, Glu-82, and Lys-121. The TrmE-type G domain occupies 215-364 (GTSIVLAGHP…LKQFIQKWMQ (150 aa)). Asn-225 contacts K(+). GTP-binding positions include 225–230 (NVGKSS), 244–250 (TDIPGTT), and 269–272 (DSAG). Ser-229 contributes to the Mg(2+) binding site. Thr-244, Ile-246, and Thr-249 together coordinate K(+). Thr-250 lines the Mg(2+) pocket. Lys-443 provides a ligand contact to (6S)-5-formyl-5,6,7,8-tetrahydrofolate.

Belongs to the TRAFAC class TrmE-Era-EngA-EngB-Septin-like GTPase superfamily. TrmE GTPase family. In terms of assembly, homodimer. Heterotetramer of two MnmE and two MnmG subunits. K(+) is required as a cofactor.

It localises to the cytoplasm. Functionally, exhibits a very high intrinsic GTPase hydrolysis rate. Involved in the addition of a carboxymethylaminomethyl (cmnm) group at the wobble position (U34) of certain tRNAs, forming tRNA-cmnm(5)s(2)U34. The sequence is that of tRNA modification GTPase MnmE from Chlamydia caviae (strain ATCC VR-813 / DSM 19441 / 03DC25 / GPIC) (Chlamydophila caviae).